A 362-amino-acid chain; its full sequence is Putative G-protein coupled receptor B0244.5 (362 aa).

The Extracellular segment spans residues M1–C47. N-linked (GlcNAc...) asparagine glycosylation is found at N7, N20, and N23. The chain crosses the membrane as a helical span at residues I48–I68. Residues P69–Q81 lie on the Cytoplasmic side of the membrane. A helical transmembrane segment spans residues Y82–L102. The Extracellular segment spans residues R103 to S125. Residues F126 to V145 form a helical membrane-spanning segment. Residues R146 to K161 are Cytoplasmic-facing. The helical transmembrane segment at F162–A182 threads the bilayer. At A183 to A204 the chain is on the extracellular side. Residues M205–V225 traverse the membrane as a helical segment. At T226–A255 the chain is on the cytoplasmic side. A helical membrane pass occupies residues W256–V276. The Extracellular segment spans residues N277 to H295. A helical membrane pass occupies residues L296–V316. Residues D317–K362 lie on the Cytoplasmic side of the membrane.

It belongs to the G-protein coupled receptor 1 family. B0244 subfamily.

The protein localises to the cell membrane. This chain is Putative G-protein coupled receptor B0244.5, found in Caenorhabditis elegans.